A 138-amino-acid polypeptide reads, in one-letter code: Phosphoribosyl-AMP cyclohydrolase (138 aa).

The segment at 1–23 is disordered; sequence MSEQSAPSPTPAAELSSDPASPL. D100 lines the Mg(2+) pocket. Zn(2+) is bound at residue C101. Positions 102 and 104 each coordinate Mg(2+). Zn(2+) is bound by residues C117 and C124.

The protein belongs to the PRA-CH family. As to quaternary structure, homodimer. Requires Mg(2+) as cofactor. Zn(2+) is required as a cofactor.

The protein resides in the cytoplasm. The enzyme catalyses 1-(5-phospho-beta-D-ribosyl)-5'-AMP + H2O = 1-(5-phospho-beta-D-ribosyl)-5-[(5-phospho-beta-D-ribosylamino)methylideneamino]imidazole-4-carboxamide. Its pathway is amino-acid biosynthesis; L-histidine biosynthesis; L-histidine from 5-phospho-alpha-D-ribose 1-diphosphate: step 3/9. Its function is as follows. Catalyzes the hydrolysis of the adenine ring of phosphoribosyl-AMP. The chain is Phosphoribosyl-AMP cyclohydrolase from Paenarthrobacter aurescens (strain TC1).